Reading from the N-terminus, the 523-residue chain is GMP synthase [glutamine-hydrolyzing] (523 aa).

Residues 8–205 (KILILDFGSQ…VVNICGCTTN (198 aa)) form the Glutamine amidotransferase type-1 domain. Cysteine 85 functions as the Nucleophile in the catalytic mechanism. Catalysis depends on residues histidine 179 and glutamate 181. The GMPS ATP-PPase domain maps to 206 to 398 (WTPENIIEDA…LGLPAEMLNR (193 aa)). Residue 233-239 (SGGVDSS) coordinates ATP.

In terms of assembly, homodimer.

The catalysed reaction is XMP + L-glutamine + ATP + H2O = GMP + L-glutamate + AMP + diphosphate + 2 H(+). The protein operates within purine metabolism; GMP biosynthesis; GMP from XMP (L-Gln route): step 1/1. In terms of biological role, catalyzes the synthesis of GMP from XMP. This is GMP synthase [glutamine-hydrolyzing] from Mannheimia succiniciproducens (strain KCTC 0769BP / MBEL55E).